The sequence spans 216 residues: Large ribosomal subunit protein uL1 (216 aa).

This sequence belongs to the universal ribosomal protein uL1 family.

This chain is Large ribosomal subunit protein uL1, found in Oryza sativa subsp. indica (Rice).